Consider the following 494-residue polypeptide: Metal cation symporter ZIP14 (494 aa).

The N-terminal stretch at 1–34 (MTLRRASGCRQLTLTIGLALTLGLLQWPIGDVRG) is a signal peptide. Residues 35 to 152 (QDGASPAQVL…PTEAEVWGYG (118 aa)) are Extracellular-facing. The helical transmembrane segment at 153–173 (LLCVTVISLCSLVGASVVPFM) threads the bilayer. The Cytoplasmic segment spans residues 174 to 181 (RKTFYKRL). A helical membrane pass occupies residues 182 to 202 (LLYFIALAIGTLYSNALFQLI). The Extracellular segment spans residues 203–219 (PEAFGFDPMEDYYVPKS). A helical transmembrane segment spans residues 220–240 (AVVFGGFYLFFFTEKILKMIL). Residues 241-397 (KPKDTGGHGH…LLNAGMSIQQ (157 aa)) are Cytoplasmic-facing. The HHHGHXHX-motif motif lies at 248 to 255 (HGHGHSHF). An XEXPHE-motif motif is present at residues 376 to 381 (EEFPHE). A helical membrane pass occupies residues 398-418 (ALFFNFLSACCCYLGMGFGIL). The Extracellular portion of the chain corresponds to 419–426 (AGNNFSPN). The helical transmembrane segment at 427–447 (WIFALAGGMFLYIALADMFPE) threads the bilayer. Over 448 to 462 (MNEVSREEEEAGGSG) the chain is Cytoplasmic. A helical transmembrane segment spans residues 463–483 (FLLTFALQNAGLLTGFAIMLV). At 484–494 (LTIYSGQIQLG) the chain is on the extracellular side.

This sequence belongs to the ZIP transporter (TC 2.A.5) family. In terms of assembly, homotrimer.

The protein localises to the cell membrane. Its subcellular location is the apical cell membrane. The protein resides in the basolateral cell membrane. It localises to the early endosome membrane. It is found in the late endosome membrane. The protein localises to the lysosome membrane. The enzyme catalyses Zn(2+)(out) + 2 hydrogencarbonate(out) = Zn(2+)(in) + 2 hydrogencarbonate(in). It carries out the reaction Mn(2+)(out) + 2 hydrogencarbonate(out) = Mn(2+)(in) + 2 hydrogencarbonate(in). It catalyses the reaction Fe(2+)(out) + 2 hydrogencarbonate(out) = Fe(2+)(in) + 2 hydrogencarbonate(in). The catalysed reaction is Cd(2+)(out) + 2 hydrogencarbonate(out) = Cd(2+)(in) + 2 hydrogencarbonate(in). Broad-scope metal ion transporter with a preference for zinc uptake. Also mediates cellular uptake of nontransferrin-bound iron. In terms of biological role, electroneutral transporter of the plasma membrane mediating the cellular uptake of the divalent metal cations zinc, manganese and iron that are important for tissue homeostasis, metabolism, development and immunity. Functions as an energy-dependent symporter, transporting through the membranes an electroneutral complex composed of a divalent metal cation and two bicarbonate anions. Beside these endogenous cellular substrates, can also import cadmium a non-essential metal which is cytotoxic and carcinogenic. This chain is Metal cation symporter ZIP14, found in Danio rerio (Zebrafish).